The chain runs to 184 residues: ATP synthase subunit b, chloroplastic (184 aa).

Residues 27–49 (LATNPINLSVVFGVLIFFGKGVL) form a helical membrane-spanning segment.

Belongs to the ATPase B chain family. As to quaternary structure, F-type ATPases have 2 components, F(1) - the catalytic core - and F(0) - the membrane proton channel. F(1) has five subunits: alpha(3), beta(3), gamma(1), delta(1), epsilon(1). F(0) has four main subunits: a(1), b(1), b'(1) and c(10-14). The alpha and beta chains form an alternating ring which encloses part of the gamma chain. F(1) is attached to F(0) by a central stalk formed by the gamma and epsilon chains, while a peripheral stalk is formed by the delta, b and b' chains.

It localises to the plastid. The protein resides in the chloroplast thylakoid membrane. Its function is as follows. F(1)F(0) ATP synthase produces ATP from ADP in the presence of a proton or sodium gradient. F-type ATPases consist of two structural domains, F(1) containing the extramembraneous catalytic core and F(0) containing the membrane proton channel, linked together by a central stalk and a peripheral stalk. During catalysis, ATP synthesis in the catalytic domain of F(1) is coupled via a rotary mechanism of the central stalk subunits to proton translocation. Functionally, component of the F(0) channel, it forms part of the peripheral stalk, linking F(1) to F(0). The protein is ATP synthase subunit b, chloroplastic of Arabidopsis thaliana (Mouse-ear cress).